The following is a 79-amino-acid chain: uncharacterized protein (79 aa).

Residues Ser-3 to Ile-54 form the TM2 domain. The next 2 membrane-spanning stretches (helical) occupy residues Ile-8–Gly-28 and Ile-37–Leu-57.

The protein localises to the cell membrane. This is an uncharacterized protein from Bacillus subtilis (strain 168).